We begin with the raw amino-acid sequence, 408 residues long: UDP-N-acetylglucosamine--dolichyl-phosphate N-acetylglucosaminephosphotransferase (408 aa).

Helical transmembrane passes span 6–26 (SLLG…IYLP) and 32–52 (WIIV…YKLI). UDP-N-acetyl-alpha-D-glucosamine-binding residues include aspartate 68 and glutamate 84. The next 2 helical transmembrane spans lie at 87-107 (GICV…FQWF) and 120-140 (AALT…VLNL). Position 145 (lysine 145) interacts with dolichyl phosphate. 2 helical membrane passes run 147–167 (ILPM…TTVV) and 181–201 (LGVV…LAIF). Position 200-208 (200-208 (IFCTNSINI)) interacts with dolichyl phosphate. Position 207 (asparagine 207) interacts with Mg(2+). Asparagine 213 provides a ligand contact to UDP-N-acetyl-alpha-D-glucosamine. 2 consecutive transmembrane segments (helical) span residues 221–241 (VVIA…ASSV) and 258–278 (HLFS…LLFY). Residue aspartate 289 participates in Mg(2+) binding. A helical membrane pass occupies residues 297–317 (MCFAVVAILCHFSKTLLLFFI). UDP-N-acetyl-alpha-D-glucosamine is bound at residue 338–340 (RHR). Transmembrane regions (helical) follow at residues 351–371 (MEAI…TGPL) and 376–396 (LCVY…GIRY).

Belongs to the glycosyltransferase 4 family. In terms of assembly, homodimer. The cofactor is Mg(2+).

It localises to the endoplasmic reticulum membrane. It catalyses the reaction a di-trans,poly-cis-dolichyl phosphate + UDP-N-acetyl-alpha-D-glucosamine = an N-acetyl-alpha-D-glucosaminyl-diphospho-di-trans,poly-cis-dolichol + UMP. Its pathway is protein modification; protein glycosylation. With respect to regulation, inhibited by natural nucleoside antibiotic tunicamycin, which acts as a structural analog and competitor of UDP-GlcNAc. Its function is as follows. UDP-N-acetylglucosamine--dolichyl-phosphate N-acetylglucosaminephosphotransferase that operates in the biosynthetic pathway of dolichol-linked oligosaccharides, the glycan precursors employed in protein asparagine (N)-glycosylation. The assembly of dolichol-linked oligosaccharides begins on the cytosolic side of the endoplasmic reticulum membrane and finishes in its lumen. The sequential addition of sugars to dolichol pyrophosphate produces dolichol-linked oligosaccharides containing fourteen sugars, including two GlcNAcs, nine mannoses and three glucoses. Once assembled, the oligosaccharide is transferred from the lipid to nascent proteins by oligosaccharyltransferases. Catalyzes the initial step of dolichol-linked oligosaccharide biosynthesis, transfering GlcNAc-1-P from cytosolic UDP-GlcNAc onto the carrier lipid dolichyl phosphate (P-dolichol), yielding GlcNAc-P-P-dolichol embedded in the cytoplasmic leaflet of the endoplasmic reticulum membrane. The protein is UDP-N-acetylglucosamine--dolichyl-phosphate N-acetylglucosaminephosphotransferase (alg7) of Dictyostelium discoideum (Social amoeba).